The primary structure comprises 320 residues: Protein PXR1 (320 aa).

Positions 1 to 11 (MGLAGPRKRTK) are enriched in basic residues. Positions 1 to 24 (MGLAGPRKRTKISHDPNNTAWSRS) are disordered. Polar residues predominate over residues 15–24 (DPNNTAWSRS). The G-patch domain maps to 25–79 (TSGYGHKIMSAQGWTPGSFLGASNAAHADHFTAGSAGHIRVILKDDNLGLGAKLR). The segment at 152-298 (GEEVQTPQIS…MGRQFTRGRH (147 aa)) is disordered. Basic residues predominate over residues 169–182 (KRPKKARKKEKRRA). Basic and acidic residues-rich tracts occupy residues 203–214 (RKENKEKKKSSD), 243–256 (KDPEPSNTEVHDDS), and 269–288 (QESRYSAKNESIRKIREHRP).

Belongs to the PINX1 family.

The protein localises to the nucleus. Its subcellular location is the nucleolus. Its function is as follows. Involved in rRNA-processing at A0, A1 and A2 sites and negatively regulates telomerase. This is Protein PXR1 (PXR1) from Ajellomyces capsulatus (strain NAm1 / WU24) (Darling's disease fungus).